Consider the following 185-residue polypeptide: Hypoxanthine/guanine phosphoribosyltransferase (185 aa).

Belongs to the purine/pyrimidine phosphoribosyltransferase family. Archaeal HPRT subfamily. In terms of assembly, homodimer.

The protein resides in the cytoplasm. The catalysed reaction is IMP + diphosphate = hypoxanthine + 5-phospho-alpha-D-ribose 1-diphosphate. It carries out the reaction GMP + diphosphate = guanine + 5-phospho-alpha-D-ribose 1-diphosphate. It participates in purine metabolism; IMP biosynthesis via salvage pathway; IMP from hypoxanthine: step 1/1. Its function is as follows. Catalyzes a salvage reaction resulting in the formation of IMP that is energically less costly than de novo synthesis. This Aciduliprofundum boonei (strain DSM 19572 / T469) protein is Hypoxanthine/guanine phosphoribosyltransferase.